A 363-amino-acid chain; its full sequence is Phosphoserine aminotransferase (363 aa).

R42 lines the L-glutamate pocket. Pyridoxal 5'-phosphate-binding residues include W105, T155, D175, and Q198. The residue at position 199 (K199) is an N6-(pyridoxal phosphate)lysine. 240–241 (NT) serves as a coordination point for pyridoxal 5'-phosphate.

It belongs to the class-V pyridoxal-phosphate-dependent aminotransferase family. SerC subfamily. In terms of assembly, homodimer. The cofactor is pyridoxal 5'-phosphate.

Its subcellular location is the cytoplasm. The enzyme catalyses O-phospho-L-serine + 2-oxoglutarate = 3-phosphooxypyruvate + L-glutamate. It carries out the reaction 4-(phosphooxy)-L-threonine + 2-oxoglutarate = (R)-3-hydroxy-2-oxo-4-phosphooxybutanoate + L-glutamate. The protein operates within amino-acid biosynthesis; L-serine biosynthesis; L-serine from 3-phospho-D-glycerate: step 2/3. It functions in the pathway cofactor biosynthesis; pyridoxine 5'-phosphate biosynthesis; pyridoxine 5'-phosphate from D-erythrose 4-phosphate: step 3/5. In terms of biological role, catalyzes the reversible conversion of 3-phosphohydroxypyruvate to phosphoserine and of 3-hydroxy-2-oxo-4-phosphonooxybutanoate to phosphohydroxythreonine. This is Phosphoserine aminotransferase from Herminiimonas arsenicoxydans.